Here is an 89-residue protein sequence, read N- to C-terminus: Small ribosomal subunit protein uS15 (89 aa).

Belongs to the universal ribosomal protein uS15 family. In terms of assembly, part of the 30S ribosomal subunit. Forms a bridge to the 50S subunit in the 70S ribosome, contacting the 23S rRNA.

One of the primary rRNA binding proteins, it binds directly to 16S rRNA where it helps nucleate assembly of the platform of the 30S subunit by binding and bridging several RNA helices of the 16S rRNA. Functionally, forms an intersubunit bridge (bridge B4) with the 23S rRNA of the 50S subunit in the ribosome. In Streptococcus pyogenes serotype M2 (strain MGAS10270), this protein is Small ribosomal subunit protein uS15.